The following is a 100-amino-acid chain: Large ribosomal subunit protein uL23 (100 aa).

The protein belongs to the universal ribosomal protein uL23 family. As to quaternary structure, part of the 50S ribosomal subunit. Contacts protein L29, and trigger factor when it is bound to the ribosome.

Functionally, one of the early assembly proteins it binds 23S rRNA. One of the proteins that surrounds the polypeptide exit tunnel on the outside of the ribosome. Forms the main docking site for trigger factor binding to the ribosome. The polypeptide is Large ribosomal subunit protein uL23 (Lactobacillus acidophilus (strain ATCC 700396 / NCK56 / N2 / NCFM)).